A 722-amino-acid chain; its full sequence is Solute carrier organic anion transporter family member 4C1 (722 aa).

Residues 1–81 (MQGSKGIENP…PGSQLSELEE (81 aa)) form a disordered region. Residues 1-101 (MQGSKGIENP…QCLQRCNTPQ (101 aa)) lie on the Cytoplasmic side of the membrane. Phosphoserine is present on residues Ser-15 and Ser-16. Thr-19 carries the post-translational modification Phosphothreonine. A phosphoserine mark is found at Ser-24, Ser-26, and Ser-28. The span at 25–46 (ASPSQVEVSAVASRNQNGGSQP) shows a compositional bias: polar residues. A helical transmembrane segment spans residues 102–122 (GFLLHYCLLALTQGIVVNGLV). Residues 123–141 (NISISTIEKRYEMKSSLTG) lie on the Extracellular side of the membrane. Residues 142-162 (LISSSYDISFCVLSLFVSFFG) form a helical membrane-spanning segment. The Cytoplasmic segment spans residues 163 to 168 (ERGHKP). Residues 169–193 (RWLAFASFMIGLGALVFSLPHFFSG) traverse the membrane as a helical segment. The Extracellular portion of the chain corresponds to 194–218 (RYELGSIFEDTCLTRNSTRCSSSTS). A helical transmembrane segment spans residues 219 to 249 (LLSNYFYVFVLGQLLLGTGGTPLYTLGTAFI). Residues 250–269 (DDSVPTHKSSLYIGIGYSMS) are Cytoplasmic-facing. The helical transmembrane segment at 270 to 290 (ILGPAIGYVLGGQLLTMYIDI) threads the bilayer. At 291-306 (AMGQSSDLTEDDPRWL) the chain is on the extracellular side. A helical membrane pass occupies residues 307 to 331 (GAWWIGFLLAWLFAWSLIMPFSCFP). Over 332–376 (KHLPGTAKIQAGKTSQTHQNNSTSFQHTDENFGKSIKDFPTAVKN) the chain is Cytoplasmic. Residues 377 to 398 (LMRNTVFICLVLSTTSEALITT) form a helical membrane-spanning segment. The Extracellular portion of the chain corresponds to 399–418 (GFATFLPKFIENQFGLTSSF). Residues 419 to 442 (AATLGGAVLIPGAALGQILGGVLV) form a helical membrane-spanning segment. Residues 443–446 (SKFK) lie on the Cytoplasmic side of the membrane. Residues 447-470 (MKCKNTMKFALCTSGVALVLSFVF) traverse the membrane as a helical segment. Topologically, residues 471-578 (IYAKCENEPF…RTRCSNLPIF (108 aa)) are extracellular. The Kazal-like domain occupies 494 to 549 (GNLTAPCNANCNCLRSYYYPLCGSDGIQYFSPCFAGCLNSVSNRKPKVYYNCSCIE). Intrachain disulfides connect Cys-500/Cys-530, Cys-506/Cys-526, and Cys-515/Cys-547. The helical transmembrane segment at 579-601 (LGIFFITVIFTFMAGTPITVSIL) threads the bilayer. Over 602 to 610 (RCVNHRHRS) the chain is Cytoplasmic. The chain crosses the membrane as a helical span at residues 611–636 (LALGVQFMLLRLLGTIPGPIIFGVII). Residues 637-670 (DSTCVLWDVNECGIKGACWIYDNIKMAHMLVAIS) are Extracellular-facing. The helical transmembrane segment at 671–688 (VTCKVITIFFNGLAIVLY) threads the bilayer. The Cytoplasmic segment spans residues 689-722 (KPPPPGTEVSFQSQNVIVSTISVEEDLDKAENEG).

It belongs to the organo anion transporter (TC 2.A.60) family. Strongly expressed in initial segment of epididymis and seminal vesicles.

It is found in the basolateral cell membrane. It carries out the reaction estrone 3-sulfate(out) = estrone 3-sulfate(in). The enzyme catalyses L-thyroxine(out) = L-thyroxine(in). It catalyses the reaction 3,3',5-triiodo-L-thyronine(out) = 3,3',5-triiodo-L-thyronine(in). The catalysed reaction is chenodeoxycholate(out) = chenodeoxycholate(in). It carries out the reaction glycocholate(out) = glycocholate(in). The enzyme catalyses L-homoarginine(in) = L-homoarginine(out). It catalyses the reaction L-arginine(in) = L-arginine(out). The catalysed reaction is N(omega),N(omega)-dimethyl-L-arginine(out) = N(omega),N(omega)-dimethyl-L-arginine(in). Functionally, mediates the transport of organic anions such as steroids (estrone 3-sulfate, chenodeoxycholate, glycocholate) and thyroid hormones (3,3',5-triiodo-L-thyronine (T3), L-thyroxine (T4)), in the kidney. Capable of transporting cAMP and pharmacological substances such as digoxin, ouabain and methotrexate. Transport is independent of sodium, chloride ion, and ATP. Transport activity is stimulated by an acidic extracellular environment due to increased substrate affinity to the transporter. The driving force for this transport activity is currently not known. The role of hydrogencarbonate (HCO3(-), bicarbonate) as the probable counteranion that exchanges for organic anions is still not well defined. Functions as an uptake transporter at the apical membrane, suggesting a role in renal reabsorption. Involved in the renal secretion of the uremic toxin ADMA (N(omega),N(omega)-dimethyl-L-arginine or asymmetrical dimethylarginine), which is associated to cardiovascular events and mortality, and the structurally related amino acids L-arginine and L-homoarginine (a cardioprotective biomarker). Can act bidirectionally, suggesting a dual protective role of this transport protein; exporting L-homoarginine after being synthesized in proximal tubule cells, and mediating uptake of ADMA from the blood into proximal tubule cells where it is degraded by the enzyme dimethylarginine dimethylaminohydrolase 1 (DDAH1). May be involved in sperm maturation by enabling directed movement of organic anions and compounds within or between cells. This ion-transporting process is important to maintain the strict epididymal homeostasis necessary for sperm maturation. May have a role in secretory functions since seminal vesicle epithelial cells are assumed to secrete proteins involved in decapacitation by modifying surface proteins to facilitate the acquisition of the ability to fertilize the egg. The sequence is that of Solute carrier organic anion transporter family member 4C1 from Mus musculus (Mouse).